Here is a 594-residue protein sequence, read N- to C-terminus: (-)-endo-fenchol synthase, chloroplastic (594 aa).

The transit peptide at 1–50 (MSSLVMHVGIVNKPAITYLPTLSRSASNLHNVSSTRLQTSCSLQLDYKPV) directs the protein to the chloroplast. 4 residues coordinate Mg(2+): D348, D352, D492, and E500. The DDXXD motif motif lies at 348–352 (DDIYD).

Belongs to the terpene synthase family. Tpsa subfamily. Mg(2+) is required as a cofactor. Mn(2+) serves as cofactor. Expressed at high levels in leaves.

It is found in the plastid. It localises to the chloroplast. The catalysed reaction is (2E)-geranyl diphosphate = alpha-pinene + diphosphate. The enzyme catalyses (2E)-geranyl diphosphate + H2O = (1S,2S,4R)-endo-fenchol + diphosphate. It carries out the reaction (2E)-geranyl diphosphate = limonene + diphosphate. It participates in secondary metabolite biosynthesis; terpenoid biosynthesis. Functionally, monoterpene synthase involved in the biosynthesis of volatile compounds widely used in aromatherapy and folk medicine, and present in culinary herbs. Mediates the conversion of (2E)-geranyl diphosphate (GPP) into alpha fenchol, limonene and alpha-pinene and, as minor compounds, into beta-myrcene, alpha-terpinolene and alpha-phellandrene. The protein is (-)-endo-fenchol synthase, chloroplastic of Lavandula pedunculata subsp. lusitanica (French lavender).